We begin with the raw amino-acid sequence, 232 residues long: Phosphoribosylaminoimidazole-succinocarboxamide synthase (232 aa).

The protein belongs to the SAICAR synthetase family.

The catalysed reaction is 5-amino-1-(5-phospho-D-ribosyl)imidazole-4-carboxylate + L-aspartate + ATP = (2S)-2-[5-amino-1-(5-phospho-beta-D-ribosyl)imidazole-4-carboxamido]succinate + ADP + phosphate + 2 H(+). The protein operates within purine metabolism; IMP biosynthesis via de novo pathway; 5-amino-1-(5-phospho-D-ribosyl)imidazole-4-carboxamide from 5-amino-1-(5-phospho-D-ribosyl)imidazole-4-carboxylate: step 1/2. The polypeptide is Phosphoribosylaminoimidazole-succinocarboxamide synthase (Finegoldia magna (strain ATCC 29328 / DSM 20472 / WAL 2508) (Peptostreptococcus magnus)).